The following is a 57-amino-acid chain: Exactin (57 aa).

4 disulfide bridges follow: cysteine 3-cysteine 19, cysteine 12-cysteine 37, cysteine 41-cysteine 49, and cysteine 50-cysteine 55.

The protein belongs to the three-finger toxin family. Short-chain subfamily. Orphan group XX sub-subfamily. Expressed by the venom gland.

Its subcellular location is the secreted. Its function is as follows. Anticoagulant protein that prevents the activation of factor X (F10). It acts by potently inhibiting the extrinsic tenase complex (ETC) (IC(50)=116.49 nM), a complex composed by active factor VII (F7a), tissue factor (TF) and F10. In addition, it shows weaker activities on other complexes. It weakly inhibits F10 activation by inhibiting the intrinsic tenase complex (IC(50)=4.05 uM), a complex composed by active factor IX (IXa, F9a), its cofactor factor VIII (VIIIa, F8a), and their substrate F10. It also weakly prevents prothrombin activation by inhibiting the prothrombinase complex (IC(50)=17.66 uM). It shows high kinetic constant towards F7a/TF/F10/phospholipids complex (Ki=30.62 nM) and lower kinetic constant towards F7a/TF/phospholipids complex (Ki=153.75 nM). This is Exactin from Hemachatus haemachatus (Rinkhals).